A 557-amino-acid polypeptide reads, in one-letter code: DNA ligase B (557 aa).

The N6-AMP-lysine intermediate role is filled by K125.

Belongs to the NAD-dependent DNA ligase family. LigB subfamily.

The catalysed reaction is NAD(+) + (deoxyribonucleotide)n-3'-hydroxyl + 5'-phospho-(deoxyribonucleotide)m = (deoxyribonucleotide)n+m + AMP + beta-nicotinamide D-nucleotide.. In terms of biological role, catalyzes the formation of phosphodiester linkages between 5'-phosphoryl and 3'-hydroxyl groups in double-stranded DNA using NAD as a coenzyme and as the energy source for the reaction. This is DNA ligase B from Pseudomonas entomophila (strain L48).